The sequence spans 467 residues: Glutamate--tRNA ligase (467 aa).

The 'HIGH' region signature appears at 9-19; sequence PSPTGYLHIGG. The short motif at 237–241 is the 'KMSKS' region element; that stretch reads KLSKR. Lys240 is a binding site for ATP.

Belongs to the class-I aminoacyl-tRNA synthetase family. Glutamate--tRNA ligase type 1 subfamily. Monomer.

It localises to the cytoplasm. The enzyme catalyses tRNA(Glu) + L-glutamate + ATP = L-glutamyl-tRNA(Glu) + AMP + diphosphate. Its function is as follows. Catalyzes the attachment of glutamate to tRNA(Glu) in a two-step reaction: glutamate is first activated by ATP to form Glu-AMP and then transferred to the acceptor end of tRNA(Glu). The chain is Glutamate--tRNA ligase from Xanthomonas campestris pv. campestris (strain 8004).